The chain runs to 247 residues: Geranylgeranylglyceryl phosphate synthase (247 aa).

Residues aspartate 23 and serine 52 each coordinate Mg(2+). Sn-glycerol 1-phosphate is bound by residues 171–177 (YLEAGSG), 203–204 (GG), and 225–226 (GT).

It belongs to the GGGP/HepGP synthase family. Group II subfamily. Requires Mg(2+) as cofactor.

The protein resides in the cytoplasm. The enzyme catalyses sn-glycerol 1-phosphate + (2E,6E,10E)-geranylgeranyl diphosphate = sn-3-O-(geranylgeranyl)glycerol 1-phosphate + diphosphate. It functions in the pathway membrane lipid metabolism; glycerophospholipid metabolism. In terms of biological role, prenyltransferase that catalyzes the transfer of the geranylgeranyl moiety of geranylgeranyl diphosphate (GGPP) to the C3 hydroxyl of sn-glycerol-1-phosphate (G1P). This reaction is the first ether-bond-formation step in the biosynthesis of archaeal membrane lipids. The chain is Geranylgeranylglyceryl phosphate synthase from Methanococcoides burtonii (strain DSM 6242 / NBRC 107633 / OCM 468 / ACE-M).